A 302-amino-acid polypeptide reads, in one-letter code: MGRFLTTTALALLATGGAATARPIRACDVSTKYLITFGDSYSQTGFDVTGTKPSASNPLGNPLLPGWTASGGLNWVGFLVSEFNTSTTLSYNFAYGGATTNATIVPPYQPTVLSFIDQVAQFSGSIARKPDYAPWNADNALFGVWIGVNDVGNVWWDPNYDSLLEQIMESYFGQLQILYDAGARNFVLLSVPPIQRTPAVLLNNSPENQKAEALAVDKYNEALAANLEAFTDKNGGITAKIVDTGVPFNTALDNPTDYGAPDATCYNSDGKSCLWFNDYHPGIEINRLVAQAVADAWKGSFF.

Residues 1–21 (MGRFLTTTALALLATGGAATA) form the signal peptide. Residues N84 and N101 are each glycosylated (N-linked (GlcNAc...) asparagine).

Belongs to the carbohydrate esterase CE16 family.

The protein localises to the secreted. It carries out the reaction an acetyl ester + H2O = an aliphatic alcohol + acetate + H(+). Acetyl esterase that acts as an exo-deacetylase. Liberates acetic acid from xylo-oligomers. In Thermothelomyces thermophilus (Myceliophthora thermophila), this protein is Acetylesterase.